Consider the following 331-residue polypeptide: 4-hydroxythreonine-4-phosphate dehydrogenase (331 aa).

Positions 136 and 137 each coordinate substrate. 3 residues coordinate a divalent metal cation: histidine 166, histidine 211, and histidine 266. Substrate contacts are provided by lysine 274, asparagine 283, and arginine 292.

The protein belongs to the PdxA family. Homodimer. Zn(2+) is required as a cofactor. The cofactor is Mg(2+). Co(2+) serves as cofactor.

Its subcellular location is the cytoplasm. It carries out the reaction 4-(phosphooxy)-L-threonine + NAD(+) = 3-amino-2-oxopropyl phosphate + CO2 + NADH. The protein operates within cofactor biosynthesis; pyridoxine 5'-phosphate biosynthesis; pyridoxine 5'-phosphate from D-erythrose 4-phosphate: step 4/5. Catalyzes the NAD(P)-dependent oxidation of 4-(phosphooxy)-L-threonine (HTP) into 2-amino-3-oxo-4-(phosphooxy)butyric acid which spontaneously decarboxylates to form 3-amino-2-oxopropyl phosphate (AHAP). This is 4-hydroxythreonine-4-phosphate dehydrogenase from Thioalkalivibrio sulfidiphilus (strain HL-EbGR7).